A 463-amino-acid chain; its full sequence is Glycine--tRNA ligase (463 aa).

R102 serves as a coordination point for substrate. The segment at K113–G134 is disordered. Position 165 (E165) interacts with substrate. ATP is bound by residues R197 to E199, F207 to F212, E284 to L285, and G328 to R331. Substrate is bound at residue F212–E216. E324–G328 contributes to the substrate binding site.

It belongs to the class-II aminoacyl-tRNA synthetase family. As to quaternary structure, homodimer.

It is found in the cytoplasm. The enzyme catalyses tRNA(Gly) + glycine + ATP = glycyl-tRNA(Gly) + AMP + diphosphate. Functionally, catalyzes the attachment of glycine to tRNA(Gly). This Mycolicibacterium paratuberculosis (strain ATCC BAA-968 / K-10) (Mycobacterium paratuberculosis) protein is Glycine--tRNA ligase.